A 336-amino-acid polypeptide reads, in one-letter code: DNA-directed RNA polymerase subunit alpha (336 aa).

Positions 1–232 (MIQKNWQELI…DQLSVFVNFD (232 aa)) are alpha N-terminal domain (alpha-NTD). The tract at residues 248 to 336 (FNPALLKKVD…DLAKRYEDQY (89 aa)) is alpha C-terminal domain (alpha-CTD).

Belongs to the RNA polymerase alpha chain family. In terms of assembly, homodimer. The RNAP catalytic core consists of 2 alpha, 1 beta, 1 beta' and 1 omega subunit. When a sigma factor is associated with the core the holoenzyme is formed, which can initiate transcription.

It catalyses the reaction RNA(n) + a ribonucleoside 5'-triphosphate = RNA(n+1) + diphosphate. In terms of biological role, DNA-dependent RNA polymerase catalyzes the transcription of DNA into RNA using the four ribonucleoside triphosphates as substrates. This Sinorhizobium fredii (strain NBRC 101917 / NGR234) protein is DNA-directed RNA polymerase subunit alpha.